Here is a 240-residue protein sequence, read N- to C-terminus: MTKRWFITGTDTDVGKTVASCALLQAATAQGYRTAGYKPVASGSQMTADGLRNSDALALQANSSQRLGYSQVNPFTFLEATSPHIASESEGRAIPLTALSQGLRQLEPSADWILIEGAGGWFTPLSPQATFADWVQQEQLPVIMVVGVKLGCINHALLTAQAIQHAGLTLAGWVANEVTPAGRRQAEYQATLTRMITAPLLGIIPYLSDIEENPVTTRRDLGHYLDLTVLRAAEREAVNM.

13-18 (DVGKTV) provides a ligand contact to ATP. Thr-17 provides a ligand contact to Mg(2+). Lys-38 is an active-site residue. Ser-42 contributes to the substrate binding site. Residues Asp-55, 116–119 (EGAG), 176–177 (NE), 205–207 (PYL), and Glu-212 contribute to the ATP site. The Mg(2+) site is built by Asp-55 and Glu-116.

The protein belongs to the dethiobiotin synthetase family. As to quaternary structure, homodimer. Mg(2+) is required as a cofactor.

The protein localises to the cytoplasm. The catalysed reaction is (7R,8S)-7,8-diammoniononanoate + CO2 + ATP = (4R,5S)-dethiobiotin + ADP + phosphate + 3 H(+). It functions in the pathway cofactor biosynthesis; biotin biosynthesis; biotin from 7,8-diaminononanoate: step 1/2. Catalyzes a mechanistically unusual reaction, the ATP-dependent insertion of CO2 between the N7 and N8 nitrogen atoms of 7,8-diaminopelargonic acid (DAPA, also called 7,8-diammoniononanoate) to form a ureido ring. This Yersinia pestis protein is ATP-dependent dethiobiotin synthetase BioD 1.